Here is a 231-residue protein sequence, read N- to C-terminus: Large ribosomal subunit protein uL1 (231 aa).

Belongs to the universal ribosomal protein uL1 family. In terms of assembly, part of the 50S ribosomal subunit.

Its function is as follows. Binds directly to 23S rRNA. The L1 stalk is quite mobile in the ribosome, and is involved in E site tRNA release. In terms of biological role, protein L1 is also a translational repressor protein, it controls the translation of the L11 operon by binding to its mRNA. This chain is Large ribosomal subunit protein uL1, found in Alcanivorax borkumensis (strain ATCC 700651 / DSM 11573 / NCIMB 13689 / SK2).